Here is a 198-residue protein sequence, read N- to C-terminus: Recombination protein RecR (198 aa).

The C4-type zinc-finger motif lies at 57 to 72; sequence CSVCGHITENDPCYIC. One can recognise a Toprim domain in the interval 80-175; that stretch reads SVICVVEDDK…KVTRLAQGLS (96 aa).

Belongs to the RecR family.

In terms of biological role, may play a role in DNA repair. It seems to be involved in an RecBC-independent recombinational process of DNA repair. It may act with RecF and RecO. The sequence is that of Recombination protein RecR from Staphylococcus epidermidis (strain ATCC 35984 / DSM 28319 / BCRC 17069 / CCUG 31568 / BM 3577 / RP62A).